Here is a 373-residue protein sequence, read N- to C-terminus: MGEVKTAIGLMSGTSMDGIDIAVLRTDGESVVRHGPSGYFPYDPGLRGIWQKALTTAKAIRERRERPGDLGEAERKLTLAHAAAVKSFLHRHRFDVGDIDVIGFHGQTVLHRPDEALTVQIGDGALLAEETGIDVVYDMRANDMVHGGQGAPLIPAYHMALSANLPDGFETPAVFVNIGGISNLTYIGEGGRLAAFDSGPGNMLIDQWIEAHTGKAFDKGGRTAAGGSVVASLVARYMESPFFSANIRRSLDRSDFVPPQKGEVSLADGARTLSHLTGAAILKSASYLPEAAKTYVVCGGGRLNPVIMEELAGLAAKQGARVIAAEEAGFDGGAMEAEAWAYLAVRSLRGLPLTYPGTTGVKEPVTGGVLVRA.

13 to 20 (GTSMDGID) contributes to the ATP binding site.

This sequence belongs to the anhydro-N-acetylmuramic acid kinase family.

It catalyses the reaction 1,6-anhydro-N-acetyl-beta-muramate + ATP + H2O = N-acetyl-D-muramate 6-phosphate + ADP + H(+). It participates in amino-sugar metabolism; 1,6-anhydro-N-acetylmuramate degradation. It functions in the pathway cell wall biogenesis; peptidoglycan recycling. Its function is as follows. Catalyzes the specific phosphorylation of 1,6-anhydro-N-acetylmuramic acid (anhMurNAc) with the simultaneous cleavage of the 1,6-anhydro ring, generating MurNAc-6-P. Is required for the utilization of anhMurNAc either imported from the medium or derived from its own cell wall murein, and thus plays a role in cell wall recycling. This chain is Anhydro-N-acetylmuramic acid kinase, found in Agrobacterium fabrum (strain C58 / ATCC 33970) (Agrobacterium tumefaciens (strain C58)).